Consider the following 169-residue polypeptide: Transmembrane protein 89 (169 aa).

Residues 1–22 (MLYTLLLVPSLFLLVMPVPSQG) form the signal peptide. The Extracellular portion of the chain corresponds to 23-75 (WSRPLWYQVGLDLQPWGCQPNSPDIWGCQPNSLDSCKNSLGCPGYWLGLGGNR). Residues 76 to 96 (IYPVAGVTITTTMLLVVSRVI) form a helical membrane-spanning segment. The Cytoplasmic portion of the chain corresponds to 97-169 (VHRWRAKVAK…QIKGSPPQSG (73 aa)).

It localises to the membrane. This is Transmembrane protein 89 (Tmem89) from Mus musculus (Mouse).